A 501-amino-acid polypeptide reads, in one-letter code: Histone deacetylase 19 (501 aa).

The segment at 17 to 329 (RKVCYFYDPE…WCYETGVALG (313 aa)) is histone deacetylase. Catalysis depends on H149, which acts as the Proton donor/acceptor. D184, H186, and D272 together coordinate Zn(2+). The disordered stretch occupies residues 383–501 (HAPSVPFQER…GAEQAFPPKT (119 aa)). Residues 397-407 (ETPEVDEDQED) show a composition bias toward acidic residues. S416 bears the Phosphoserine mark. Composition is skewed to basic and acidic residues over residues 422–457 (DDRK…KGCE) and 479–488 (ASVKMEEEGT).

It belongs to the histone deacetylase family. HD type 1 subfamily. In terms of assembly, interacts with SIN3, SAP18 and TPR1. Interacts with CDKE-1, MED14 and LUG. Interacts with TPL. Interacts with AHL22. The cofactor is Zn(2+). In terms of tissue distribution, highly expressed in leaves, stems, flowers and young siliques.

It localises to the nucleus. It carries out the reaction N(6)-acetyl-L-lysyl-[histone] + H2O = L-lysyl-[histone] + acetate. Its function is as follows. Responsible for the deacetylation of lysine residues on the N-terminal part of the core histones (H2A, H2B, H3 and H4). Histone deacetylation gives a tag for epigenetic repression and plays an important role in transcriptional regulation, cell cycle progression and developmental events. Histone deacetylases act via the formation of large multiprotein complexes. HDA19 is involved in jasmonic acid and ethylene signaling of pathogen response. Part of a repressor complex including APETALA2 (AP2) and TOPLESS (TPL) that control the expression domains of numerous floral organ identity genes. Involved in negative regulation of salinity stress response. Represses the expression of stress tolerance-related genes, genes coding for late embryogenesis abundant (LEA) proteins that prevent protein aggregation, and positive regulators of abscisic acid (ABA) signaling, such as ABI5 and NAC019. The chain is Histone deacetylase 19 from Arabidopsis thaliana (Mouse-ear cress).